A 322-amino-acid chain; its full sequence is Replication-associated protein G2P (322 aa).

This sequence belongs to the inovirus G2P protein family.

It catalyses the reaction ATP + (deoxyribonucleotide)n-3'-hydroxyl + 5'-phospho-(deoxyribonucleotide)m = (deoxyribonucleotide)n+m + AMP + diphosphate.. In terms of biological role, isoform G2P plays an essential role in viral DNA replication. Binds the origin of replication and cleaves the dsDNA replicative form I (RFI) and becomes covalently bound to it via phosphotyrosine bond, generating the dsDNA replicative form II (RFII). In turn, viral DNA replication initiates at the 3'-OH of the cleavage site. After one round of rolling circle synthesis, protein G2P is linked to the newly synthesized ssDNA and joins the ends of the displaced strand to generate a circular single-stranded molecule ready to be packed into a virion. Functionally, isoform G10P protein binds to double-stranded DNA and prevents hydrolysis by nucleases. Additionally, G10P is an inhibitor of DNA replication and may have a role in the transition from semiconservative replicative form DNA replication to single-stranded DNA synthesis in the life cycle. The protein is Replication-associated protein G2P (II) of Escherichia phage If1 (Bacteriophage If1).